The sequence spans 159 residues: Transmembrane protein 42 (159 aa).

4 helical membrane-spanning segments follow: residues 37–57 (FWGV…AASA), 68–88 (GFCV…WTFF), 100–120 (IASV…GFVL), and 124–144 (CQEV…TLIH).

The protein localises to the membrane. In Bos taurus (Bovine), this protein is Transmembrane protein 42 (TMEM42).